Consider the following 700-residue polypeptide: MSKPLPRKLFVTTALPYANGAFHVGHIMEYIQADIWVRFQRMQGNEVHFVGADDAHGAPIMIAAEKAGLTPQQFVANIAAGRKQYLDGFHIEFDNWSSTDSPENHELSREIYRRLRDDAKLITTKSVEQFYDPVKEMFLPDRYIKGECPKCGTKDQYGDSCENCSAVYAPTDLKHPYSTLTGATPVRKSSDHFFFRLSDPKCVAFLREWALDGQRLQSEVANKAKEWLEGEGGLGDWDISRDAPYFGIEIPDAPGKYFYVWLDAPVGYLATLKNYFDKTGRDFDAFMADPSTEQYHFIGKDITYFHTLFWPAMLKFADMKVPNNVFVHGFITVSGEKMSKSRGTGISPLRYLEIGMNPEWLRYYIAAKLSSKVEDIDFTSDDFIARVNSDLIGKYINIASRAAGFITKKFDGRVATDWATSDDAFLSRLRNVASEIQALYDQREYGKALRAIMEQADAINAYVDANKPWELAKDPAKEAALQEVCSRLLEAFRILTIYLKPVLPALAKQVEAQLNIAPLEWHHIITPLPHGHQINPYVHLMTRVEPKMLDALFDMPALVDATVGVPTSPSNKDGDTNGNGHAIESIAPEIKIDDFAKIDLRIAKIVNCEHVEGSDKLLRLTLDVGEGRMRNVFSGIKSAYKPEDLIGKLTVMVANLAPRKMKFGISEGMVLAASAADEKANPGIYILNPWPGAEPGMRVG.

The short motif at Pro-16 to His-26 is the 'HIGH' region element. Residues Cys-148, Cys-151, Cys-161, and Cys-164 each coordinate Zn(2+). The 'KMSKS' region signature appears at Lys-337–Ser-341. Lys-340 provides a ligand contact to ATP. The 107-residue stretch at Asp-594–Gly-700 folds into the tRNA-binding domain.

This sequence belongs to the class-I aminoacyl-tRNA synthetase family. MetG type 1 subfamily. Homodimer. Zn(2+) serves as cofactor.

The protein resides in the cytoplasm. It carries out the reaction tRNA(Met) + L-methionine + ATP = L-methionyl-tRNA(Met) + AMP + diphosphate. In terms of biological role, is required not only for elongation of protein synthesis but also for the initiation of all mRNA translation through initiator tRNA(fMet) aminoacylation. The protein is Methionine--tRNA ligase of Janthinobacterium sp. (strain Marseille) (Minibacterium massiliensis).